The following is a 156-amino-acid chain: Arginine repressor (156 aa).

It belongs to the ArgR family.

The protein localises to the cytoplasm. It functions in the pathway amino-acid biosynthesis; L-arginine biosynthesis [regulation]. Regulates arginine biosynthesis genes. This chain is Arginine repressor, found in Klebsiella pneumoniae (strain 342).